Here is a 171-residue protein sequence, read N- to C-terminus: Photosystem I assembly protein Ycf3 (171 aa).

3 TPR repeats span residues 35-68 (AFTYYRDGMSAQSEGEYAEALQNYYKAMRLEIDP), 72-105 (SYILYNIGLIHTSNGEHAKALEYYSQALERNPSL), and 120-153 (GEQAIQQGDPETSEAWFDQAAEYWKQAIALAPSN).

The protein belongs to the Ycf3 family.

Its subcellular location is the plastid. It is found in the chloroplast thylakoid membrane. Essential for the assembly of the photosystem I (PSI) complex. May act as a chaperone-like factor to guide the assembly of the PSI subunits. This Angiopteris evecta (Mule's foot fern) protein is Photosystem I assembly protein Ycf3.